The sequence spans 295 residues: Nucleotide-binding protein YjiE (295 aa).

Residue 12-19 participates in ATP binding; it reads GMSGAGKT. 63 to 66 is a binding site for GTP; the sequence is DMRS.

Belongs to the RapZ-like family.

Functionally, displays ATPase and GTPase activities. This is Nucleotide-binding protein YjiE (yjiE) from Lactococcus lactis subsp. lactis (strain IL1403) (Streptococcus lactis).